A 505-amino-acid polypeptide reads, in one-letter code: 4-alpha-glucanotransferase (505 aa).

This sequence belongs to the disproportionating enzyme family.

The protein localises to the cytoplasm. The enzyme catalyses Transfers a segment of a (1-&gt;4)-alpha-D-glucan to a new position in an acceptor, which may be glucose or a (1-&gt;4)-alpha-D-glucan.. In Synechocystis sp. (strain ATCC 27184 / PCC 6803 / Kazusa), this protein is 4-alpha-glucanotransferase (malQ).